The chain runs to 129 residues: Putative reactive intermediate deaminase TdcF (129 aa).

Lysine 58 bears the N6-(pyridoxal phosphate)lysine mark. Substrate is bound by residues 105–107 and glutamate 120; that span reads RSC.

The protein belongs to the RutC family. In terms of assembly, homotrimer.

The protein operates within amino-acid degradation; L-threonine degradation via propanoate pathway. Its function is as follows. May be a post-translational regulator that controls the metabolic fate of L-threonine or the potentially toxic intermediate 2-ketobutyrate. The polypeptide is Putative reactive intermediate deaminase TdcF (tdcF) (Escherichia coli O6:H1 (strain CFT073 / ATCC 700928 / UPEC)).